We begin with the raw amino-acid sequence, 700 residues long: Pyrroloquinoline quinone transporter (700 aa).

An N-terminal signal peptide occupies residues 1–23 (MKIFSVRQTVLPALLVLSPVVFA). The TBDR plug domain maps to 39-157 (SELDTPAAVS…SGGVMNVTTQ (119 aa)). The next 24 beta stranded transmembrane spans lie at 132 to 136 (NVEVL), 150 to 160 (GVMNVTTQTGQ), 162 to 171 (PPTIEASSYY), 177 to 186 (WRYGLKATGA), 195 to 204 (DVDYTVSTTR), 220 to 227 (LANAKLGV), 233 to 241 (SKLSLIFNS), 280 to 288 (QAGLRYERS), 295 to 301 (MSVMMYA), 335 to 344 (GIDSRWTHRG), 350 to 358 (VTFTTGLNY), 398 to 405 (DPYLQTQW), 411 to 419 (LSLDAGVRY), 447 to 456 (WLPAGSLKYA), 464 to 468 (YLAAG), 500 to 509 (TIEIGSKTRI), 511 to 520 (DGLLSLALFQ), 549 to 556 (GAELAWDQ), 563 to 570 (RVNASWTW), 597 to 604 (MGFASIGY), 611 to 617 (YAGTEAR), 637 to 647 (LVGLFTGYKYN), 651 to 659 (LTVDLFGRV), and 689 to 697 (YGVGMNIAW). The region spanning 162 to 697 (PPTIEASSYY…NYGVGMNIAW (536 aa)) is the TBDR beta-barrel domain. Positions 680–700 (YYEPSPGRNYGVGMNIAWRFE) match the TonB C-terminal box motif.

This sequence belongs to the TonB-dependent receptor family.

It localises to the cell outer membrane. Functionally, mediates the TonB-dependent high affinity transport across the outer membrane of pyrroloquinoline quinone (PQQ), a redox cofactor required for the activity of Gcd and Asd dehydrogenases. The uptake process is energised via the TonB-ExbBD complex. Not involved in the transport of an iron-containing substrate under laboratory conditions. The protein is Pyrroloquinoline quinone transporter of Escherichia coli (strain K12).